A 322-amino-acid chain; its full sequence is MQRLAPALRQDNVPLDLISLIKTILAATKEISFRVSQGHLGDVMGSTLDENIQGEVQKQLDVVANELFKDILLESGFVKAISSEEEDHSVAGDENGKYIVSFDPLDGSSNIDINSLIGTIFSIHEAPKDIAAGDDDMFKQAGDKQVCAGYVLYGPSTMLVMTTGSGTHFYVLDRTHGGFLLVERNVQVPADTQEFAVNMSNQRFWQAPMQNYISDLLAGDTGPREKNFNMRWIAAMVGDIHRVLCRGGIFTYPADSRKPEQPYKLRLMYEANPMAFLLEQAGGLAMTSEGRIMDIEPNSIHQRVEVIMGSKNEVEKCLSYYN.

Residues glutamate 84, aspartate 103, leucine 105, and aspartate 106 each coordinate Mg(2+). Residues 106-109, asparagine 198, and lysine 264 each bind substrate; that span reads DGSS. Position 270 (glutamate 270) interacts with Mg(2+).

This sequence belongs to the FBPase class 1 family. As to quaternary structure, homotetramer. Requires Mg(2+) as cofactor.

It is found in the cytoplasm. The enzyme catalyses beta-D-fructose 1,6-bisphosphate + H2O = beta-D-fructose 6-phosphate + phosphate. The protein operates within carbohydrate biosynthesis; gluconeogenesis. This is Fructose-1,6-bisphosphatase class 1 from Colwellia psychrerythraea (strain 34H / ATCC BAA-681) (Vibrio psychroerythus).